Here is a 214-residue protein sequence, read N- to C-terminus: Adenylate kinase (214 aa).

An ATP-binding site is contributed by 10–15; the sequence is GAGKGT. Residues 30 to 59 form an NMP region; the sequence is STGDMFREEISAKSELGRKVEDILKRGELV. Residues Thr31, Arg36, 57-59, 85-88, and Gln92 each bind AMP; these read ELV and GYPR. The interval 126–163 is LID; that stretch reads NRRICKNCGKIYNLITLPPKINGKCDVCGGELYQREDD. Arg127 provides a ligand contact to ATP. Residues Cys130 and Cys133 each contribute to the Zn(2+) site. Residue 136–137 coordinates ATP; it reads IY. Residues Cys150 and Cys153 each contribute to the Zn(2+) site. Residues Arg160 and Arg171 each coordinate AMP. Met199 serves as a coordination point for ATP.

This sequence belongs to the adenylate kinase family. As to quaternary structure, monomer.

The protein localises to the cytoplasm. The catalysed reaction is AMP + ATP = 2 ADP. Its pathway is purine metabolism; AMP biosynthesis via salvage pathway; AMP from ADP: step 1/1. Its function is as follows. Catalyzes the reversible transfer of the terminal phosphate group between ATP and AMP. Plays an important role in cellular energy homeostasis and in adenine nucleotide metabolism. The polypeptide is Adenylate kinase (Thermosipho melanesiensis (strain DSM 12029 / CIP 104789 / BI429)).